A 330-amino-acid polypeptide reads, in one-letter code: Phospholipase C (330 aa).

The first 34 residues, 1 to 34 (MVKKTKSNSLKKVATLALANLLLVGALTDNSAKA), serve as a signal peptide directing secretion. A disulfide bond links Cys155 and Cys191.

It belongs to the neutral sphingomyelinase family. Monomer.

The protein localises to the secreted. It catalyses the reaction a 1,2-diacyl-sn-glycero-3-phosphocholine + H2O = phosphocholine + a 1,2-diacyl-sn-glycerol + H(+). Its function is as follows. Bacterial hemolysins are exotoxins that attack blood cell membranes and cause cell rupture. Beta-hemolysin is a phospholipase C with specific activity toward sphingomyelins. Has a high specificity for sphingomyelin, hydrolyzes lysophosphatidylcholine at a much lower rate, but has no activity towards phosphatidylcholine, phosphatidylethanolamine, or phosphatidylserine. The protein is Phospholipase C (hlb) of Staphylococcus aureus (strain NCTC 8325 / PS 47).